The following is a 421-amino-acid chain: Aspartokinase (421 aa).

An ATP-binding site is contributed by K7–G10. Residue R25–K30 participates in substrate binding. S41 contributes to the ATP binding site. Substrate-binding positions include D45–E49, E74, L125–D126, R151–S154, and S154. ATP-binding positions include S174–D175, Y180–R185, and K210. ACT domains are found at residues V267–Q343 and L349–R421. Substrate is bound by residues D274, D274–A279, N292–D294, Q298, V360–T361, N374–I375, and S381–E382.

This sequence belongs to the aspartokinase family. In terms of assembly, tetramer consisting of 2 isoforms Alpha (catalytic and regulation) and of a homodimer of 2 isoforms Beta (regulation). The dimerization of the beta isoforms is stabilized by the bonding of threonine.

It carries out the reaction L-aspartate + ATP = 4-phospho-L-aspartate + ADP. The protein operates within amino-acid biosynthesis; L-lysine biosynthesis via DAP pathway; (S)-tetrahydrodipicolinate from L-aspartate: step 1/4. It participates in amino-acid biosynthesis; L-methionine biosynthesis via de novo pathway; L-homoserine from L-aspartate: step 1/3. Its pathway is amino-acid biosynthesis; L-threonine biosynthesis; L-threonine from L-aspartate: step 1/5. With respect to regulation, feedback inhibition by lysine and threonine, but he enzyme is moderately inhibited by lysine alone, and threonine alone has no effect. Its function is as follows. Catalyzes the phosphorylation of the beta-carboxyl group of aspartic acid with ATP to yield 4-phospho-L-aspartate, which is involved in the branched biosynthetic pathway leading to the biosynthesis of amino acids lysine, threonine, isoleucine and methionine. The sequence is that of Aspartokinase (lysC) from Corynebacterium glutamicum (strain ATCC 13032 / DSM 20300 / JCM 1318 / BCRC 11384 / CCUG 27702 / LMG 3730 / NBRC 12168 / NCIMB 10025 / NRRL B-2784 / 534).